We begin with the raw amino-acid sequence, 194 residues long: Histone H1.0 (194 aa).

Position 1 is an N-acetylmethionine (M1). Residues 1–11 are compositionally biased toward low complexity; that stretch reads MTENSTSAPAA. Residues 1-28 are disordered; sequence MTENSTSAPAAKPKRAKASKKSTDHPKY. At T2 the chain carries N-acetylthreonine; in Histone H1.0, N-terminally processed. The H15 domain occupies 24-97; that stretch reads DHPKYSDMIV…GASGSFRLAK (74 aa). Position 42 is a citrulline (R42). The tract at residues 86-194 is disordered; the sequence is GVGASGSFRL…SSAKRASKKK (109 aa). S104 carries the post-translational modification ADP-ribosylserine. A compositionally biased stretch (basic residues) spans 105–194; it reads VAFKKTKKEV…SSAKRASKKK (90 aa).

This sequence belongs to the histone H1/H5 family. In terms of processing, ADP-ribosylated on Ser-104 in response to DNA damage.

Its subcellular location is the nucleus. The protein resides in the chromosome. Functionally, histones H1 are necessary for the condensation of nucleosome chains into higher-order structures. The histones H1.0 are found in cells that are in terminal stages of differentiation or that have low rates of cell division. In Mus musculus (Mouse), this protein is Histone H1.0 (H1-0).